The primary structure comprises 768 residues: DNA ligase (768 aa).

NAD(+) contacts are provided by residues 61-65, 110-111, and Glu-146; these read DAEFD and SL. Lys-148 serves as the catalytic N6-AMP-lysine intermediate. NAD(+)-binding residues include Arg-169, Glu-206, Lys-322, and Lys-346. Positions 443, 446, 462, and 468 each coordinate Zn(2+). The 90-residue stretch at 661 to 750 folds into the BRCT domain; that stretch reads SVPRTLEGLT…PAQTGTEAEA (90 aa). Residues 739–768 form a disordered region; sequence NGPAQTGTEAEAATDEATVVDETAAEAATE. Over residues 746–768 the composition is skewed to low complexity; the sequence is TEAEAATDEATVVDETAAEAATE.

It belongs to the NAD-dependent DNA ligase family. LigA subfamily. Mg(2+) is required as a cofactor. It depends on Mn(2+) as a cofactor.

The enzyme catalyses NAD(+) + (deoxyribonucleotide)n-3'-hydroxyl + 5'-phospho-(deoxyribonucleotide)m = (deoxyribonucleotide)n+m + AMP + beta-nicotinamide D-nucleotide.. Its function is as follows. DNA ligase that catalyzes the formation of phosphodiester linkages between 5'-phosphoryl and 3'-hydroxyl groups in double-stranded DNA using NAD as a coenzyme and as the energy source for the reaction. It is essential for DNA replication and repair of damaged DNA. The polypeptide is DNA ligase (Paenarthrobacter aurescens (strain TC1)).